Here is a 430-residue protein sequence, read N- to C-terminus: Glutamate-1-semialdehyde 2,1-aminomutase (430 aa).

Lys266 bears the N6-(pyridoxal phosphate)lysine mark.

The protein belongs to the class-III pyridoxal-phosphate-dependent aminotransferase family. HemL subfamily. As to quaternary structure, homodimer. Requires pyridoxal 5'-phosphate as cofactor.

The protein localises to the cytoplasm. The catalysed reaction is (S)-4-amino-5-oxopentanoate = 5-aminolevulinate. The protein operates within porphyrin-containing compound metabolism; protoporphyrin-IX biosynthesis; 5-aminolevulinate from L-glutamyl-tRNA(Glu): step 2/2. The polypeptide is Glutamate-1-semialdehyde 2,1-aminomutase (Acidithiobacillus ferrooxidans (strain ATCC 23270 / DSM 14882 / CIP 104768 / NCIMB 8455) (Ferrobacillus ferrooxidans (strain ATCC 23270))).